The primary structure comprises 231 residues: Large ribosomal subunit protein uL1 (231 aa).

The protein belongs to the universal ribosomal protein uL1 family. As to quaternary structure, part of the 50S ribosomal subunit.

Functionally, binds directly to 23S rRNA. The L1 stalk is quite mobile in the ribosome, and is involved in E site tRNA release. Its function is as follows. Protein L1 is also a translational repressor protein, it controls the translation of the L11 operon by binding to its mRNA. This chain is Large ribosomal subunit protein uL1, found in Pseudomonas savastanoi pv. phaseolicola (strain 1448A / Race 6) (Pseudomonas syringae pv. phaseolicola (strain 1448A / Race 6)).